A 440-amino-acid chain; its full sequence is Protein ABHD8 (440 aa).

Positions 123 to 158 are disordered; sequence DPAGSDGRSAPGSGSGSGSGSGSGGRRRRARRPKRT. A compositionally biased stretch (low complexity) spans 124-134; the sequence is PAGSDGRSAPG. The span at 135–146 shows a compositional bias: gly residues; it reads SGSGSGSGSGSG. Over residues 147-158 the composition is skewed to basic residues; the sequence is GRRRRARRPKRT. Residues 178–280 form the AB hydrolase-1 domain; sequence VLFFIHGVGG…HKVIMINGGG (103 aa). Active-site charge relay system residues include Ser-253, Asp-371, and His-399.

The protein belongs to the AB hydrolase superfamily. In terms of assembly, interacts with NLRP3 (via NACHT and LLR domains); this interaction is enhanced in the presence of NLRP3 inflammasome inducers, such as ATP, nigericin, silica, or alum. Interacts with ZDHHC12.

Its subcellular location is the cytoplasm. In terms of biological role, negatively regulates NLRP3-driven inflammation. Promotes NLRP3 degradation through the chaperone-mediated autophagy (CMA) pathway, hence attenuating inflammasome activation and IL1B secretion. Acts by recruiting palmitoyltransferase ZDHHC12 to NLRP3, facilitating NLRP3 palmitoylation and subsequent degradation. In Macaca fascicularis (Crab-eating macaque), this protein is Protein ABHD8.